A 403-amino-acid polypeptide reads, in one-letter code: Large ribosomal subunit protein uL3 (403 aa).

A disordered region spans residues 1 to 38 (MSHRKFSAPRHGSLGFLPRKRSSRHRGKVKSFPKDDSS). Phosphoserine is present on Ser-13. Basic residues predominate over residues 18–31 (PRKRSSRHRGKVKS). Lys-39 is covalently cross-linked (Glycyl lysine isopeptide (Lys-Gly) (interchain with G-Cter in SUMO2)). Position 136 is an N6-acetyllysine (Lys-136). Residues Lys-224 and Lys-226 each participate in a glycyl lysine isopeptide (Lys-Gly) (interchain with G-Cter in SUMO2) cross-link. Residue His-245 is modified to Tele-methylhistidine. N6-acetyllysine; alternate is present on residues Lys-286 and Lys-294. Lys-286 is covalently cross-linked (Glycyl lysine isopeptide (Lys-Gly) (interchain with G-Cter in SUMO2); alternate). A Glycyl lysine isopeptide (Lys-Gly) (interchain with G-Cter in SUMO1); alternate cross-link involves residue Lys-294. Ser-304 carries the post-translational modification Phosphoserine. Position 366 is an N6-acetyllysine; alternate (Lys-366). A Glycyl lysine isopeptide (Lys-Gly) (interchain with G-Cter in SUMO2); alternate cross-link involves residue Lys-366. N6-acetyllysine is present on Lys-373. Residues Lys-386, Lys-393, and Lys-399 each participate in a glycyl lysine isopeptide (Lys-Gly) (interchain with G-Cter in SUMO2) cross-link.

It belongs to the universal ribosomal protein uL3 family. Component of the large ribosomal subunit. Interacts with DHX33. Post-translationally, constitutively monomethylated at His-245 by METTL18. Methylation at His-245 regulates translation elongation by slowing ribosome traversal on tyrosine codons: slower elongation provides enough time for proper folding of synthesized proteins and prevents cellular aggregation of tyrosine-rich proteins It is not required for incorporation of RPL3 into ribosomes.

Its subcellular location is the nucleus. The protein localises to the nucleolus. The protein resides in the cytoplasm. Its function is as follows. Component of the large ribosomal subunit. The ribosome is a large ribonucleoprotein complex responsible for the synthesis of proteins in the cell. The polypeptide is Large ribosomal subunit protein uL3 (RPL3) (Sus scrofa (Pig)).